The primary structure comprises 456 residues: tRNA-2-methylthio-N(6)-dimethylallyladenosine synthase (456 aa).

One can recognise an MTTase N-terminal domain in the interval 18–134; it reads KKLFIETYGC…LPDLVASVEA (117 aa). The [4Fe-4S] cluster site is built by Cys-27, Cys-63, Cys-98, Cys-172, Cys-176, and Cys-179. Positions 158 to 390 constitute a Radical SAM core domain; sequence CGNHISGFVS…IELQNRLSAE (233 aa). One can recognise a TRAM domain in the interval 393–456; sequence ARDVGKTFEV…SATLKGEEVF (64 aa).

The protein belongs to the methylthiotransferase family. MiaB subfamily. In terms of assembly, monomer. [4Fe-4S] cluster is required as a cofactor.

Its subcellular location is the cytoplasm. The catalysed reaction is N(6)-dimethylallyladenosine(37) in tRNA + (sulfur carrier)-SH + AH2 + 2 S-adenosyl-L-methionine = 2-methylsulfanyl-N(6)-dimethylallyladenosine(37) in tRNA + (sulfur carrier)-H + 5'-deoxyadenosine + L-methionine + A + S-adenosyl-L-homocysteine + 2 H(+). In terms of biological role, catalyzes the methylthiolation of N6-(dimethylallyl)adenosine (i(6)A), leading to the formation of 2-methylthio-N6-(dimethylallyl)adenosine (ms(2)i(6)A) at position 37 in tRNAs that read codons beginning with uridine. The sequence is that of tRNA-2-methylthio-N(6)-dimethylallyladenosine synthase from Phocaeicola vulgatus (strain ATCC 8482 / DSM 1447 / JCM 5826 / CCUG 4940 / NBRC 14291 / NCTC 11154) (Bacteroides vulgatus).